Consider the following 128-residue polypeptide: MIFGIGLDLVELEQIRQTLERQPRIVKRVLTAEEQNRFYTLSDKRQLEYLAGRFAAKEAFVKAFGTGIGADVSWLDLEVLNEASGRPVMTGPFEGTIHLSITHSDHYAAAQVLLEKRSSDVSTNLDRN.

Mg(2+) is bound by residues Asp8 and Glu58.

Belongs to the P-Pant transferase superfamily. AcpS family. It depends on Mg(2+) as a cofactor.

The protein resides in the cytoplasm. It carries out the reaction apo-[ACP] + CoA = holo-[ACP] + adenosine 3',5'-bisphosphate + H(+). Functionally, transfers the 4'-phosphopantetheine moiety from coenzyme A to a Ser of acyl-carrier-protein. The polypeptide is Holo-[acyl-carrier-protein] synthase (Exiguobacterium sibiricum (strain DSM 17290 / CCUG 55495 / CIP 109462 / JCM 13490 / 255-15)).